A 765-amino-acid chain; its full sequence is uncharacterized protein (765 aa).

Disordered regions lie at residues 9–61 (NDGN…PSSV), 128–164 (QQQQPVKTVNKKNSKSNKSNANKNNNNINNNNNNYTS), 265–289 (TTSSVNANSNINPYPNSNSSINITT), 301–373 (WTTT…TYIQ), 409–526 (IGNN…NQSN), 540–560 (PTKKQIKKQSQPQEKLSKYSE), and 668–765 (NSNT…KSRI). 2 stretches are compositionally biased toward low complexity: residues 40–61 (SNNINNNNNNNNNNKSSIPSSV) and 143–161 (SNKSNANKNNNNINNNNNN). Low complexity-rich tracts occupy residues 301-311 (WTTTKPTSSTK), 325-344 (YDSPQSSPPRQSSLLISTSS), 353-373 (IQPTNIVQSSSSSFSSPTYIQ), 414-428 (SNHTSLTPNLTSLST), 438-485 (NNNN…INNN), 495-504 (DNQSSYSSPD), and 513-526 (SQQQQQQNNNNQSN). A compositionally biased stretch (low complexity) spans 668 to 745 (NSNTDNYNYY…NNSRNNYNNN (78 aa)).

This is an uncharacterized protein from Dictyostelium discoideum (Social amoeba).